A 239-amino-acid polypeptide reads, in one-letter code: Uridylate kinase (239 aa).

Lysine 10 to glycine 13 serves as a coordination point for ATP. The involved in allosteric activation by GTP stretch occupies residues glycine 18–glycine 23. Glycine 52 is a binding site for UMP. ATP is bound by residues glycine 53 and arginine 57. UMP contacts are provided by residues aspartate 73 and threonine 134–threonine 141. Residues threonine 161, tyrosine 167, and aspartate 170 each contribute to the ATP site.

This sequence belongs to the UMP kinase family. In terms of assembly, homohexamer.

It localises to the cytoplasm. It catalyses the reaction UMP + ATP = UDP + ADP. It participates in pyrimidine metabolism; CTP biosynthesis via de novo pathway; UDP from UMP (UMPK route): step 1/1. With respect to regulation, allosterically activated by GTP. Inhibited by UTP. In terms of biological role, catalyzes the reversible phosphorylation of UMP to UDP. The chain is Uridylate kinase from Campylobacter jejuni subsp. jejuni serotype O:6 (strain 81116 / NCTC 11828).